Consider the following 489-residue polypeptide: Serotonin-gated chloride channel mod-1 (489 aa).

Positions 1–20 (MKFIPEITLLLLLFVHSTQA) are cleaved as a signal peptide. Residues 21–240 (KGKRRKCPEG…VTFTFKRRYG (220 aa)) are Extracellular-facing. Asn-44, Asn-103, and Asn-144 each carry an N-linked (GlcNAc...) asparagine glycan. Residues Tyr-180 and Trp-226 each coordinate serotonin. 3 helical membrane-spanning segments follow: residues 241–261 (FYIIQAYVPTYLTIIVSWVSF), 274–294 (VGISSLLALTFQFGNILKNLP), and 304–324 (VWMLGCISFVFGTMVELAFVC). Topologically, residues 325–458 (YISRCQNSVR…ARFHPEAVDK (134 aa)) are cytoplasmic. The interval 365–398 (GSVISHYHPTSNGNGNNNRHDTPQVTGRGSLHRN) is disordered. Residues 372-391 (HPTSNGNGNNNRHDTPQVTG) are compositionally biased toward polar residues. Residues 459–479 (FSIVAFPLAFTMFNLVYWWHY) form a helical membrane-spanning segment.

It belongs to the ligand-gated ion channel (TC 1.A.9) family. Expressed in a subset of muscles, and head and tail neurons, including RME and GABAergic ventral nerve cord neurons. Expressed in AIY, RME, RID, RIF, ASI, DD1-6, and PVN neurons.

Its subcellular location is the membrane. It localises to the cell membrane. Functionally, functions as a 5-hydroxytryptamine (serotonin) receptor. This receptor is a ligand-gated anion-specific ion channel, selective for chloride ions. Relays a long-range endocrine signal from the body cavity neurons to modulate distal adipose triglyceride lipase atgl-1 function, via the nuclear receptor nhr-76. Together with the G-protein coupled serotonin receptor ser-1 involved in male mating behavior. May mediate an inhibitory effect of serotonin on egg laying. Involved in regulating locomotory behavior, perhaps by modulating interneuronal signaling, acting in concert with G-protein coupled serotonin receptor ser-4. In the presence of food, plays a role in initiating and extending dwelling behavior, perhaps acting in AIY, RIF and ASI neurons, in opposition to neuropeptide PDF-mediated signaling. Plays a role in aversive learning upon exposure to pathogens such as Gram-negative bacterium P.aeruginosa strain PA14; perhaps acting in interneurons in response to serotonin released by the serotonergic ADF neurons. In Caenorhabditis elegans, this protein is Serotonin-gated chloride channel mod-1.